We begin with the raw amino-acid sequence, 1245 residues long: Probable tail spike protein (1245 aa).

Residues 1105–1245 (SDVHYKMDIV…EARLQALEEK (141 aa)) enclose the Peptidase S74 domain.

Proteolytic cleavage and release of the chaperone in the host cytosol stabilizes the folded protein. The cleavage gives rise to the mature tail spike protein but is not essential for catalytic activity.

The protein localises to the virion. Functions as a receptor binding protein (RBP) and probably mediates the attachment to the host capsular exopolysaccharides. Displays a depolymerase activity that specifically degrades the KN2-type polysaccharides of Klebsiella pneumoniae capsule. Its function is as follows. The C-terminal chaperone protein mediates homotrimerization and proper folding of the catalytic trimer. This is Probable tail spike protein from Klebsiella (Taipeivirus 0507KN21).